The chain runs to 66 residues: ATP synthase protein 8 (66 aa).

A helical membrane pass occupies residues 8–24 (TWLMMIMSMFLALFIIF). K54 is subject to N6-acetyllysine; alternate. K54 bears the N6-succinyllysine; alternate mark. K57 is modified (N6-acetyllysine).

Belongs to the ATPase protein 8 family. In terms of assembly, F-type ATPases have 2 components, CF(1) - the catalytic core - and CF(0) - the membrane proton channel. Component of an ATP synthase complex composed of ATP5PB, ATP5MC1, ATP5F1E, ATP5PD, ATP5ME, ATP5PF, ATP5MF, MT-ATP6, MT-ATP8, ATP5F1A, ATP5F1B, ATP5F1D, ATP5F1C, ATP5PO, ATP5MG, ATP5MK and ATP5MJ. Interacts with PRICKLE3.

The protein localises to the mitochondrion membrane. Functionally, mitochondrial membrane ATP synthase (F(1)F(0) ATP synthase or Complex V) produces ATP from ADP in the presence of a proton gradient across the membrane which is generated by electron transport complexes of the respiratory chain. F-type ATPases consist of two structural domains, F(1) - containing the extramembraneous catalytic core and F(0) - containing the membrane proton channel, linked together by a central stalk and a peripheral stalk. During catalysis, ATP synthesis in the catalytic domain of F(1) is coupled via a rotary mechanism of the central stalk subunits to proton translocation. Part of the complex F(0) domain. Minor subunit located with subunit a in the membrane. This chain is ATP synthase protein 8 (MT-ATP8), found in Cervus elaphus hippelaphus (European red deer).